The chain runs to 427 residues: Trigger factor (427 aa).

The 86-residue stretch at 163–248 (GDTVVIDFVG…IHEVKEKEVP (86 aa)) folds into the PPIase FKBP-type domain.

This sequence belongs to the FKBP-type PPIase family. Tig subfamily.

It localises to the cytoplasm. It carries out the reaction [protein]-peptidylproline (omega=180) = [protein]-peptidylproline (omega=0). Functionally, involved in protein export. Acts as a chaperone by maintaining the newly synthesized protein in an open conformation. Functions as a peptidyl-prolyl cis-trans isomerase. The sequence is that of Trigger factor from Streptococcus gordonii (strain Challis / ATCC 35105 / BCRC 15272 / CH1 / DL1 / V288).